The sequence spans 116 residues: Large ribosomal subunit protein uL18 (116 aa).

The protein belongs to the universal ribosomal protein uL18 family. Part of the 50S ribosomal subunit; part of the 5S rRNA/L5/L18/L25 subcomplex. Contacts the 5S and 23S rRNAs.

Functionally, this is one of the proteins that bind and probably mediate the attachment of the 5S RNA into the large ribosomal subunit, where it forms part of the central protuberance. The protein is Large ribosomal subunit protein uL18 of Pseudomonas syringae pv. tomato (strain ATCC BAA-871 / DC3000).